Here is a 251-residue protein sequence, read N- to C-terminus: Cell division protein ZapD (251 aa).

Belongs to the ZapD family. As to quaternary structure, interacts with FtsZ.

It localises to the cytoplasm. Cell division factor that enhances FtsZ-ring assembly. Directly interacts with FtsZ and promotes bundling of FtsZ protofilaments, with a reduction in FtsZ GTPase activity. The polypeptide is Cell division protein ZapD (Burkholderia thailandensis (strain ATCC 700388 / DSM 13276 / CCUG 48851 / CIP 106301 / E264)).